The primary structure comprises 176 residues: Crossover junction endodeoxyribonuclease RuvC (176 aa).

Active-site residues include D7, E67, and D139. Residues D7, E67, and D139 each coordinate Mg(2+).

This sequence belongs to the RuvC family. Homodimer which binds Holliday junction (HJ) DNA. The HJ becomes 2-fold symmetrical on binding to RuvC with unstacked arms; it has a different conformation from HJ DNA in complex with RuvA. In the full resolvosome a probable DNA-RuvA(4)-RuvB(12)-RuvC(2) complex forms which resolves the HJ. Mg(2+) is required as a cofactor.

It is found in the cytoplasm. It carries out the reaction Endonucleolytic cleavage at a junction such as a reciprocal single-stranded crossover between two homologous DNA duplexes (Holliday junction).. The RuvA-RuvB-RuvC complex processes Holliday junction (HJ) DNA during genetic recombination and DNA repair. Endonuclease that resolves HJ intermediates. Cleaves cruciform DNA by making single-stranded nicks across the HJ at symmetrical positions within the homologous arms, yielding a 5'-phosphate and a 3'-hydroxyl group; requires a central core of homology in the junction. The consensus cleavage sequence is 5'-(A/T)TT(C/G)-3'. Cleavage occurs on the 3'-side of the TT dinucleotide at the point of strand exchange. HJ branch migration catalyzed by RuvA-RuvB allows RuvC to scan DNA until it finds its consensus sequence, where it cleaves and resolves the cruciform DNA. This is Crossover junction endodeoxyribonuclease RuvC from Pelobacter propionicus (strain DSM 2379 / NBRC 103807 / OttBd1).